An 80-amino-acid chain; its full sequence is Mu-conotoxin BuIIIC (80 aa).

Positions 1 to 22 (MMSKLGVLLTICLLLFPLFALP) are cleaved as a signal peptide. The propeptide occupies 23-51 (QDGDQPADRPAERMQDDLSSEQHPLFEKR). 3 disulfides stabilise this stretch: Cys-56-Cys-70, Cys-57-Cys-76, and Cys-66-Cys-77. Cys-77 carries the cysteine amide modification.

This sequence belongs to the conotoxin M superfamily. Expressed by the venom duct.

It is found in the secreted. In terms of biological role, mu-conotoxins block voltage-gated sodium channels. Extremely potent inhibitor of Nav1.4/SCN4A (96% inhibition at 1 uM). The inhibition is very slowly reversible. In Conus bullatus (Bubble cone), this protein is Mu-conotoxin BuIIIC.